Reading from the N-terminus, the 329-residue chain is Phenylalanine--tRNA ligase alpha subunit (329 aa).

Glu-253 lines the Mg(2+) pocket.

It belongs to the class-II aminoacyl-tRNA synthetase family. Phe-tRNA synthetase alpha subunit type 1 subfamily. Tetramer of two alpha and two beta subunits. The cofactor is Mg(2+).

The protein resides in the cytoplasm. The catalysed reaction is tRNA(Phe) + L-phenylalanine + ATP = L-phenylalanyl-tRNA(Phe) + AMP + diphosphate + H(+). This chain is Phenylalanine--tRNA ligase alpha subunit, found in Coxiella burnetii (strain CbuK_Q154) (Coxiella burnetii (strain Q154)).